The sequence spans 348 residues: Centromere protein L (348 aa).

The protein belongs to the CENP-L/IML3 family.

The protein resides in the nucleus. Its subcellular location is the chromosome. The protein localises to the centromere. Functionally, probable component of a centromeric complex involved in assembly of kinetochore proteins, mitotic progression and chromosome segregation. In Xenopus tropicalis (Western clawed frog), this protein is Centromere protein L (cenpl).